The chain runs to 259 residues: MGIFDGKVAIITGGGKAKSIGYGIAVAYAKEGANLVLTGRNEQKLLDAKEELERLYGIKVLPLAVDVTPSDESEDRVKEAVQKVIAEFGRIDVLINNAQASASGIPLSMQTKDHFDLGIYSGLYATFYYMRECYPYLKETQGSVINFASGAGLFGNVGQCSYAAAKEGIRGLSRVAATEWGKDNINVNVVCPLAMTAQLENFKLSYPEAYEKNLRGVPMGRFGDPELDIGRVCVQLGSPDFKYMSGETLTLEGGMGQRP.

The Proton acceptor role is filled by Tyr162.

The protein belongs to the short-chain dehydrogenases/reductases (SDR) family. In terms of assembly, homotetramer.

The catalysed reaction is cholate + NADP(+) = 3alpha,7alpha-dihydroxy-12-oxo-5beta-cholanate + NADPH + H(+). The enzyme catalyses deoxycholate + NADP(+) = 12-dehydrodeoxycholate + NADPH + H(+). Functionally, catalyzes the oxidation of the 12alpha-hydroxy group of bile acids, like cholate and deoxycholate. Is also able to catalyze the reverse reaction in vitro. Is likely involved in an epimerization pathway of bile acids that converts hydroxy groups from alpha to beta positions via stable oxo-intermediates, which occurs in the human gut. In Clostridium sp. (strain ATCC 29733 / VPI C48-50), this protein is 12alpha-hydroxysteroid dehydrogenase.